The primary structure comprises 530 residues: Amidase FVEG_08295 (530 aa).

Residues K138 and S214 each act as charge relay system in the active site. Substrate-binding positions include S214 and 235–238 (IAGS). S238 acts as the Acyl-ester intermediate in catalysis.

It belongs to the amidase family.

The catalysed reaction is a monocarboxylic acid amide + H2O = a monocarboxylate + NH4(+). Its pathway is xenobiotic degradation. Its function is as follows. Amidase; part of the Fusarium detoxification of benzoxazolinone cluster 1 (FDB1) involved in the degradation of benzoxazolinones produced by the host plant. Maize, wheat, and rye produce the 2 benzoxazinone phytoanticipins 2,4-dihy-droxy-7-methoxy-1,4-benzoxazin-3-one (DIMBOA) and 2,4-dihydroxy-1,4-benzoxazin-3-one (DIBOA) that, due to their inherent instability once released, spontaneously degrade to the more stable corresponding benzoxazolinones, 6-methoxy-2-benzoxazolinone (MBOA) and 2-benzoxazolinone (BOA), respectively. The first step in the detoxification of benzoxazolinones involves the hydrolysis of the cyclic ester bond of benzoxazolinones by the FDB1 cluster gamma-lactamase MBL1 to aminophenols. MBL1 is able to convert BOA into 2-aminophenol (2-AP), as well as MBOA into 5-methoxy-2-aminophenol (2-AMP). The FDB2 cluster N-malonyltransferase FDB2/NAT1 then metabolizes aminophenols via N-malonylation to non-toxic malonamic acids. FDB2/NAT1 converts 2-AP into N-(2-hydroxyphenyl) malonamic acid (HPMA) and 2-AMP into N-(2-hydroxy-4-methoxyphenyl) malonamic acid (HMPMA). The duplicated dienlactone hydrolases DLH1 and DLH2 may provide redundant function for hydrolyzing the lactone moiety in the BOA molecule. The roles of the amidases an other enzymes encoded by the 2 FDB clusters have not been identified so far. This chain is Amidase FVEG_08295, found in Gibberella moniliformis (strain M3125 / FGSC 7600) (Maize ear and stalk rot fungus).